Reading from the N-terminus, the 238-residue chain is 2,3-bisphosphoglycerate-dependent phosphoglycerate mutase (238 aa).

Substrate-binding positions include 8-15 (RHGQSEWN), 21-22 (TG), Arg60, 86-89 (ERHY), Lys97, 113-114 (RR), and 182-183 (GN). Catalysis depends on His9, which acts as the Tele-phosphohistidine intermediate. Residue Glu86 is the Proton donor/acceptor of the active site.

The protein belongs to the phosphoglycerate mutase family. BPG-dependent PGAM subfamily. Homodimer.

The catalysed reaction is (2R)-2-phosphoglycerate = (2R)-3-phosphoglycerate. It participates in carbohydrate degradation; glycolysis; pyruvate from D-glyceraldehyde 3-phosphate: step 3/5. Catalyzes the interconversion of 2-phosphoglycerate and 3-phosphoglycerate. The sequence is that of 2,3-bisphosphoglycerate-dependent phosphoglycerate mutase from Pelagibacter ubique (strain HTCC1062).